We begin with the raw amino-acid sequence, 99 residues long: Malonate decarboxylase acyl carrier protein (99 aa).

The residue at position 25 (Ser-25) is an O-(phosphoribosyl dephospho-coenzyme A)serine.

The protein belongs to the MdcC family. In terms of processing, covalently binds the prosthetic group of malonate decarboxylase.

It localises to the cytoplasm. In terms of biological role, subunit of malonate decarboxylase, it is an acyl carrier protein to which acetyl and malonyl thioester residues are bound via a 2'-(5''-phosphoribosyl)-3'-dephospho-CoA prosthetic group and turn over during the catalytic mechanism. The sequence is that of Malonate decarboxylase acyl carrier protein from Azotobacter vinelandii (strain DJ / ATCC BAA-1303).